We begin with the raw amino-acid sequence, 51 residues long: Ribosome biogenesis protein Nop10 (51 aa).

It belongs to the NOP10 family.

Functionally, involved in ribosome biogenesis; more specifically in 18S rRNA pseudouridylation and in cleavage of pre-rRNA. In Nitrosopumilus maritimus (strain SCM1), this protein is Ribosome biogenesis protein Nop10.